Consider the following 309-residue polypeptide: Isoaspartyl peptidase/L-asparaginase (309 aa).

The Nucleophile role is filled by Thr-166. Residues Arg-194–Asp-197 and Thr-217–Gly-220 each bind substrate.

Belongs to the Ntn-hydrolase family. In terms of assembly, heterodimer of an alpha and beta chain produced by autocleavage. In terms of processing, cleaved into an alpha and beta chain by autocatalysis; this activates the enzyme. The N-terminal residue of the beta subunit is responsible for the nucleophile hydrolase activity.

The protein localises to the cytoplasm. The catalysed reaction is L-asparagine + H2O = L-aspartate + NH4(+). It carries out the reaction Cleavage of a beta-linked Asp residue from the N-terminus of a polypeptide.. In terms of biological role, has both L-asparaginase and beta-aspartyl peptidase activity. Does not have aspartylglucosaminidase activity and is inactive toward GlcNAc-L-Asn. Likewise, has no activity toward glutamine. This Xenopus laevis (African clawed frog) protein is Isoaspartyl peptidase/L-asparaginase (asrgl1).